The primary structure comprises 450 residues: LanC-like protein 2 (450 aa).

G2 is lipidated: N-myristoyl glycine. The interaction with inositol phospholipids stretch occupies residues 2-14 (GETMSKRLKFHLG). Residue Y198 is modified to Phosphotyrosine.

The protein belongs to the LanC-like protein family. As to quaternary structure, interacts with an array of inositol phospholipids such as phosphatidylinositol 3-phosphate (PI3P), phosphatidylinositol 4-phosphate (PI4P) and phosphatidylinositol 5-phosphate (PI5P). PIP-binding enhances membrane association. Myristoylated. Essential for membrane association.

Its subcellular location is the nucleus. It localises to the cytoplasm. The protein localises to the cell membrane. In terms of biological role, necessary for abscisic acid (ABA) binding on the cell membrane and activation of the ABA signaling pathway in granulocytes. The sequence is that of LanC-like protein 2 (Lancl2) from Mus musculus (Mouse).